A 317-amino-acid polypeptide reads, in one-letter code: Acetyl-coenzyme A carboxylase carboxyl transferase subunit alpha (317 aa).

The 251-residue stretch at 41–291 (KVDKLLRSTY…SMALDSALRD (251 aa)) folds into the CoA carboxyltransferase C-terminal domain.

It belongs to the AccA family. In terms of assembly, acetyl-CoA carboxylase is a heterohexamer composed of biotin carboxyl carrier protein (AccB), biotin carboxylase (AccC) and two subunits each of ACCase subunit alpha (AccA) and ACCase subunit beta (AccD).

Its subcellular location is the cytoplasm. It carries out the reaction N(6)-carboxybiotinyl-L-lysyl-[protein] + acetyl-CoA = N(6)-biotinyl-L-lysyl-[protein] + malonyl-CoA. Its pathway is lipid metabolism; malonyl-CoA biosynthesis; malonyl-CoA from acetyl-CoA: step 1/1. Its function is as follows. Component of the acetyl coenzyme A carboxylase (ACC) complex. First, biotin carboxylase catalyzes the carboxylation of biotin on its carrier protein (BCCP) and then the CO(2) group is transferred by the carboxyltransferase to acetyl-CoA to form malonyl-CoA. The chain is Acetyl-coenzyme A carboxylase carboxyl transferase subunit alpha from Paramagnetospirillum magneticum (strain ATCC 700264 / AMB-1) (Magnetospirillum magneticum).